Consider the following 843-residue polypeptide: Protein P (843 aa).

The segment at 1–177 is terminal protein domain (TP); it reads MPLSYQHFRK…FCGSPYSWEQ (177 aa). The tract at residues 178 to 346 is spacer; sequence DLQHGRLVFQ…YCLCHIVNLI (169 aa). Disordered stretches follow at residues 220 to 269 and 291 to 316; these read KSRL…HNCA and TSKG…RSRS. The interval 347–690 is polymerase/reverse transcriptase domain (RT); that stretch reads EDWGPCTEHG…YLNLYPVARQ (344 aa). Residues 357–600 enclose the Reverse transcriptase domain; that stretch reads EHRIRTPRTP…YSLNFMGYVI (244 aa). Positions 429, 551, and 552 each coordinate Mg(2+).

The protein belongs to the hepadnaviridae P protein family.

It catalyses the reaction DNA(n) + a 2'-deoxyribonucleoside 5'-triphosphate = DNA(n+1) + diphosphate. The enzyme catalyses Endonucleolytic cleavage to 5'-phosphomonoester.. Activated by host HSP70 and HSP40 in vitro to be able to bind the epsilon loop of the pgRNA. Because deletion of the RNase H region renders the protein partly chaperone-independent, the chaperones may be needed indirectly to relieve occlusion of the RNA-binding site by this domain. Inhibited by several reverse-transcriptase inhibitors: Lamivudine, Adefovir and Entecavir. In terms of biological role, multifunctional enzyme that converts the viral RNA genome into dsDNA in viral cytoplasmic capsids. This enzyme displays a DNA polymerase activity that can copy either DNA or RNA templates, and a ribonuclease H (RNase H) activity that cleaves the RNA strand of RNA-DNA heteroduplexes in a partially processive 3'- to 5'-endonucleasic mode. Neo-synthesized pregenomic RNA (pgRNA) are encapsidated together with the P protein, and reverse-transcribed inside the nucleocapsid. Initiation of reverse-transcription occurs first by binding the epsilon loop on the pgRNA genome, and is initiated by protein priming, thereby the 5'-end of (-)DNA is covalently linked to P protein. Partial (+)DNA is synthesized from the (-)DNA template and generates the relaxed circular DNA (RC-DNA) genome. After budding and infection, the RC-DNA migrates in the nucleus, and is converted into a plasmid-like covalently closed circular DNA (cccDNA). The activity of P protein does not seem to be necessary for cccDNA generation, and is presumably released from (+)DNA by host nuclear DNA repair machinery. The protein is Protein P of Homo sapiens (Human).